An 85-amino-acid chain; its full sequence is Putative membrane protein insertion efficiency factor (85 aa).

Belongs to the UPF0161 family.

The protein resides in the cell inner membrane. Functionally, could be involved in insertion of integral membrane proteins into the membrane. This chain is Putative membrane protein insertion efficiency factor, found in Tolumonas auensis (strain DSM 9187 / NBRC 110442 / TA 4).